The sequence spans 219 residues: Large ribosomal subunit protein uL3 (219 aa).

Belongs to the universal ribosomal protein uL3 family. Part of the 50S ribosomal subunit. Forms a cluster with proteins L14 and L19.

Its function is as follows. One of the primary rRNA binding proteins, it binds directly near the 3'-end of the 23S rRNA, where it nucleates assembly of the 50S subunit. The sequence is that of Large ribosomal subunit protein uL3 from Corynebacterium kroppenstedtii (strain DSM 44385 / JCM 11950 / CIP 105744 / CCUG 35717).